Here is an 81-residue protein sequence, read N- to C-terminus: Sec-independent protein translocase protein TatA (81 aa).

Residues 1-21 (MGSLSLWHWIIVGAVLLLLFG) form a helical membrane-spanning segment. Residues 41–81 (KKGLSEDDEKPEAARPAEPARSLDHQPVAEQPKVSETHRIG) form a disordered region.

Belongs to the TatA/E family. In terms of assembly, the Tat system comprises two distinct complexes: a TatABC complex, containing multiple copies of TatA, TatB and TatC subunits, and a separate TatA complex, containing only TatA subunits. Substrates initially bind to the TatABC complex, which probably triggers association of the separate TatA complex to form the active translocon.

The protein localises to the cell inner membrane. Its function is as follows. Part of the twin-arginine translocation (Tat) system that transports large folded proteins containing a characteristic twin-arginine motif in their signal peptide across membranes. TatA could form the protein-conducting channel of the Tat system. This chain is Sec-independent protein translocase protein TatA, found in Beijerinckia indica subsp. indica (strain ATCC 9039 / DSM 1715 / NCIMB 8712).